Consider the following 193-residue polypeptide: MVATGSLSGKNPASISELLDCGYRPESLLSDFDYWDYVVPEPNLNEVIFEESTCQNLVKMLENCLSKSKQTKLGCSKVLVPEKLTQRIAQDVLRLSSTEPCGLRGCVMHVNLEIENVCKKLDRIVCDSSVVPTFELTLVFKQENCSWSSFRDFFFSRGRFSSGFRRTLILSSGFRLVKKKLYSLIGATVIEGS.

The protein belongs to the DDIT4 family.

It is found in the cytoplasm. In terms of biological role, inhibits cell growth by regulating the TOR signaling pathway upstream of the TSC1-TSC2 complex and downstream of AKT1. The chain is DNA damage-inducible transcript 4-like protein (DDIT4L) from Pongo abelii (Sumatran orangutan).